The sequence spans 307 residues: Ubiquitin recognition factor in ER-associated degradation protein 1 (307 aa).

M1 carries the post-translational modification N-acetylmethionine. S129, S231, S245, S247, and S299 each carry phosphoserine. Disordered stretches follow at residues 230-255 (GSGNRLDGKKKGVEPSPSPIKPGDIK) and 282-307 (EEDEAGGRFVAFSGEGQSLRKKGRKP).

The protein belongs to the UFD1 family. As to quaternary structure, interacts with USP13. Heterodimer with NPLOC4, this heterodimer binds VCP and inhibits Golgi membrane fusion. Interacts with ZFAND2B; probably through VCP.

It localises to the nucleus. The protein resides in the cytoplasm. It is found in the cytosol. The protein operates within protein degradation; proteasomal ubiquitin-dependent pathway. Functionally, essential component of the ubiquitin-dependent proteolytic pathway which degrades ubiquitin fusion proteins. The ternary complex containing UFD1, VCP and NPLOC4 binds ubiquitinated proteins and is necessary for the export of misfolded proteins from the ER to the cytoplasm, where they are degraded by the proteasome. The NPLOC4-UFD1-VCP complex regulates spindle disassembly at the end of mitosis and is necessary for the formation of a closed nuclear envelope. It may be involved in the development of some ectoderm-derived structures. Acts as a negative regulator of type I interferon production via the complex formed with VCP and NPLOC4, which binds to RIGI and recruits RNF125 to promote ubiquitination and degradation of RIGI. This Rattus norvegicus (Rat) protein is Ubiquitin recognition factor in ER-associated degradation protein 1.